We begin with the raw amino-acid sequence, 395 residues long: Dihydroorotate dehydrogenase (quinone), mitochondrial (395 aa).

The N-terminal 10 residues, 1–10 (MAWRHLKKRA), are a transit peptide targeting the mitochondrion; not cleaved. The Mitochondrial matrix portion of the chain corresponds to 1–10 (MAWRHLKKRA). A helical membrane pass occupies residues 11 to 30 (QDAVIILGGGGLLFASYLMA). Residues 31 to 395 (TGDERFYAEH…TDAIGADHRR (365 aa)) are Mitochondrial intermembrane-facing. FMN is bound by residues 95 to 99 (AGFDK) and serine 119. Lysine 99 is a binding site for substrate. A substrate-binding site is contributed by 144–148 (NRYGF). Asparagine 180 and asparagine 211 together coordinate FMN. 211-216 (NVSSPN) is a substrate binding site. Serine 214 functions as the Nucleophile in the catalytic mechanism. Positions 254 and 282 each coordinate FMN. 283 to 284 (NT) serves as a coordination point for substrate. FMN is bound by residues glycine 305, glycine 334, and 355–356 (YT).

It belongs to the dihydroorotate dehydrogenase family. Type 2 subfamily. Monomer. The cofactor is FMN. The uncleaved transit peptide is required for mitochondrial targeting and proper membrane integration.

Its subcellular location is the mitochondrion inner membrane. It catalyses the reaction (S)-dihydroorotate + a quinone = orotate + a quinol. The protein operates within pyrimidine metabolism; UMP biosynthesis via de novo pathway; orotate from (S)-dihydroorotate (quinone route): step 1/1. Catalyzes the conversion of dihydroorotate to orotate with quinone as electron acceptor. Required for UMP biosynthesis via de novo pathway. The protein is Dihydroorotate dehydrogenase (quinone), mitochondrial (DHODH) of Homo sapiens (Human).